The sequence spans 625 residues: Chromatin structure-remodeling complex subunit RSC4 (625 aa).

The interval 1 to 35 is disordered; that stretch reads MVVKKRKLATEAGGSDERPKYLPGKHPKNQEKTPH. 2 Bromo domains span residues 53–158 and 181–292; these read WHIP…VLKA and KLVD…IQKE. 2 positions are modified to phosphoserine: serine 199 and serine 545. Polar residues predominate over residues 536 to 552; that stretch reads RTSNVNSNLSQPQQQEN. The disordered stretch occupies residues 536–555; that stretch reads RTSNVNSNLSQPQQQENDVI.

In terms of assembly, component of the two forms of the RSC complex composed of at least either RSC1 or RSC2, and ARP7, ARP9, LDB7, NPL6, RSC3, RSC30, RSC4, RSC58, RSC6, RSC8, RSC9, SFH1, STH1, HTL1 and probably RTT102. The complexes interact with histone and histone variant components of centromeric chromatin.

It is found in the nucleus. Functionally, component of the chromatin structure remodeling complex (RSC), which is involved in transcription regulation and nucleosome positioning. RSC is responsible for the transfer of a histone octamer from a nucleosome core particle to naked DNA. The reaction requires ATP and involves an activated RSC-nucleosome intermediate. Remodeling reaction also involves DNA translocation, DNA twist and conformational change. As a reconfigurer of centromeric and flanking nucleosomes, RSC complex is required both for proper kinetochore function in chromosome segregation and, via a PKC1-dependent signaling pathway, for organization of the cellular cytoskeleton. This Saccharomyces cerevisiae (strain ATCC 204508 / S288c) (Baker's yeast) protein is Chromatin structure-remodeling complex subunit RSC4 (RSC4).